A 479-amino-acid polypeptide reads, in one-letter code: Acetylcholine receptor subunit alpha-type acr-15 (479 aa).

An N-terminal signal peptide occupies residues 1–18 (MLLPILLHFLLLITQLNG). Residues 19–230 (SPAEVRLIND…HLRRRTLYYS (212 aa)) are Extracellular-facing. Residues N60 and N92 are each glycosylated (N-linked (GlcNAc...) asparagine). C146 and C160 form a disulfide bridge. N-linked (GlcNAc...) asparagine glycosylation is present at N200. A disulfide bridge connects residues C208 and C209. A helical membrane pass occupies residues 231 to 251 (FNLIAPVLLTMILVILGFTVS). Topologically, residues 252-257 (PETCEK) are cytoplasmic. Residues 258–278 (VGLQISVSLAICIFLTIMSEL) traverse the membrane as a helical segment. Residues 279-285 (TPQTSEA) are Extracellular-facing. A helical membrane pass occupies residues 286 to 306 (VPLLGVFFHTCNFISVLATSF). Over 307–453 (TVYVQSFHFR…WRFAAIVVDR (147 aa)) the chain is Cytoplasmic. Residues 454-474 (LCLLAFSLLIVVVSIIIALRA) traverse the membrane as a helical segment. The Extracellular segment spans residues 475-479 (PYLFA).

It belongs to the ligand-gated ion channel (TC 1.A.9) family. Acetylcholine receptor (TC 1.A.9.1) subfamily. As to expression, expressed in interneurons, motor neurons, pharyngeal neurons and muscles.

It is found in the cell membrane. The protein resides in the postsynaptic cell membrane. In terms of biological role, after binding acetylcholine, the AChR responds by an extensive change in conformation that affects all subunits and leads to opening of an ion-conducting channel across the plasma membrane. Activity is required in glutamatergic neurons to mediate nicotine-induced and nicotine-motivated behaviors. In Caenorhabditis elegans, this protein is Acetylcholine receptor subunit alpha-type acr-15.